A 217-amino-acid chain; its full sequence is Probable GTP-binding protein EngB (217 aa).

In terms of domain architecture, EngB-type G spans 37–214; the sequence is DGVEIAFAGR…RAAMAKLLEE (178 aa). Residues 45–52, 72–76, 92–95, 159–162, and 193–195 contribute to the GTP site; these read GRSNVGKS, GRTQE, DMPG, TKAD, and TSS. Positions 52 and 74 each coordinate Mg(2+).

The protein belongs to the TRAFAC class TrmE-Era-EngA-EngB-Septin-like GTPase superfamily. EngB GTPase family. The cofactor is Mg(2+).

Functionally, necessary for normal cell division and for the maintenance of normal septation. This chain is Probable GTP-binding protein EngB, found in Bradyrhizobium diazoefficiens (strain JCM 10833 / BCRC 13528 / IAM 13628 / NBRC 14792 / USDA 110).